We begin with the raw amino-acid sequence, 437 residues long: UDP-N-acetylmuramate--L-alanine ligase (437 aa).

114-120 (GTHGKTS) is an ATP binding site.

The protein belongs to the MurCDEF family.

It is found in the cytoplasm. It carries out the reaction UDP-N-acetyl-alpha-D-muramate + L-alanine + ATP = UDP-N-acetyl-alpha-D-muramoyl-L-alanine + ADP + phosphate + H(+). It functions in the pathway cell wall biogenesis; peptidoglycan biosynthesis. Functionally, cell wall formation. This is UDP-N-acetylmuramate--L-alanine ligase from Lactobacillus gasseri (strain ATCC 33323 / DSM 20243 / BCRC 14619 / CIP 102991 / JCM 1131 / KCTC 3163 / NCIMB 11718 / NCTC 13722 / AM63).